Reading from the N-terminus, the 156-residue chain is ATP synthase subunit b (156 aa).

Residues 11–31 traverse the membrane as a helical segment; that stretch reads AIAFVLFVLFCMKYVWPPLMA.

Belongs to the ATPase B chain family. As to quaternary structure, F-type ATPases have 2 components, F(1) - the catalytic core - and F(0) - the membrane proton channel. F(1) has five subunits: alpha(3), beta(3), gamma(1), delta(1), epsilon(1). F(0) has three main subunits: a(1), b(2) and c(10-14). The alpha and beta chains form an alternating ring which encloses part of the gamma chain. F(1) is attached to F(0) by a central stalk formed by the gamma and epsilon chains, while a peripheral stalk is formed by the delta and b chains.

The protein resides in the cell inner membrane. In terms of biological role, f(1)F(0) ATP synthase produces ATP from ADP in the presence of a proton or sodium gradient. F-type ATPases consist of two structural domains, F(1) containing the extramembraneous catalytic core and F(0) containing the membrane proton channel, linked together by a central stalk and a peripheral stalk. During catalysis, ATP synthesis in the catalytic domain of F(1) is coupled via a rotary mechanism of the central stalk subunits to proton translocation. Its function is as follows. Component of the F(0) channel, it forms part of the peripheral stalk, linking F(1) to F(0). The sequence is that of ATP synthase subunit b from Shigella boydii serotype 18 (strain CDC 3083-94 / BS512).